The chain runs to 208 residues: MWKWILTHCASAFPHLPGCCCCCFLLLFLVSSVPVTCQALGQDMVSPEATNSSSSSFSSPSSAGRHVRSYNHLQGDVRWRKLFSFTKYFLKIEKNGKVSGTKKENCPYSILEITSVEIGVVAVKAINSNYYLAMNKKGKLYGSKEFNNDCKLKERIEENGYNTYASFNWQHNGRQMYVALNGKGAPRRGQKTRRKNTSAHFLPMVVHS.

Residues 1 to 37 (MWKWILTHCASAFPHLPGCCCCCFLLLFLVSSVPVTC) form the signal peptide. N-linked (GlcNAc...) asparagine glycans are attached at residues Asn51 and Asn196.

It belongs to the heparin-binding growth factors family. Interacts with FGFR1 and FGFR2. Interacts with FGFBP1.

The protein resides in the secreted. Its function is as follows. Plays an important role in the regulation of embryonic development, cell proliferation and cell differentiation. Required for normal branching morphogenesis. May play a role in wound healing. The sequence is that of Fibroblast growth factor 10 (FGF10) from Homo sapiens (Human).